Reading from the N-terminus, the 239-residue chain is LexA repressor (239 aa).

A DNA-binding region (H-T-H motif) is located at residues 26–46 (FDEMKDALDLASKSGIHRLIT). Active-site for autocatalytic cleavage activity residues include S159 and K197.

Belongs to the peptidase S24 family. In terms of assembly, homodimer.

It catalyses the reaction Hydrolysis of Ala-|-Gly bond in repressor LexA.. Functionally, represses a number of genes involved in the response to DNA damage (SOS response), including recA and lexA. In the presence of single-stranded DNA, RecA interacts with LexA causing an autocatalytic cleavage which disrupts the DNA-binding part of LexA, leading to derepression of the SOS regulon and eventually DNA repair. The protein is LexA repressor of Rhizobium etli (strain CIAT 652).